The chain runs to 456 residues: Bifunctional protein GlmU (456 aa).

The interval M1–K228 is pyrophosphorylase. Residues L11–G14, K25, Q75, G80–T81, Y102–D104, G138, E153, N168, and N226 contribute to the UDP-N-acetyl-alpha-D-glucosamine site. Residue D104 coordinates Mg(2+). N226 provides a ligand contact to Mg(2+). Residues L229–A249 form a linker region. Residues G250–Q456 are N-acetyltransferase. R332 and K350 together coordinate UDP-N-acetyl-alpha-D-glucosamine. The active-site Proton acceptor is H362. The UDP-N-acetyl-alpha-D-glucosamine site is built by Y365 and N376. Acetyl-CoA contacts are provided by residues A379, N385–Y386, S404, A422, and R439.

It in the N-terminal section; belongs to the N-acetylglucosamine-1-phosphate uridyltransferase family. The protein in the C-terminal section; belongs to the transferase hexapeptide repeat family. In terms of assembly, homotrimer. Mg(2+) is required as a cofactor.

The protein resides in the cytoplasm. It carries out the reaction alpha-D-glucosamine 1-phosphate + acetyl-CoA = N-acetyl-alpha-D-glucosamine 1-phosphate + CoA + H(+). The catalysed reaction is N-acetyl-alpha-D-glucosamine 1-phosphate + UTP + H(+) = UDP-N-acetyl-alpha-D-glucosamine + diphosphate. It functions in the pathway nucleotide-sugar biosynthesis; UDP-N-acetyl-alpha-D-glucosamine biosynthesis; N-acetyl-alpha-D-glucosamine 1-phosphate from alpha-D-glucosamine 6-phosphate (route II): step 2/2. The protein operates within nucleotide-sugar biosynthesis; UDP-N-acetyl-alpha-D-glucosamine biosynthesis; UDP-N-acetyl-alpha-D-glucosamine from N-acetyl-alpha-D-glucosamine 1-phosphate: step 1/1. It participates in bacterial outer membrane biogenesis; LPS lipid A biosynthesis. Its function is as follows. Catalyzes the last two sequential reactions in the de novo biosynthetic pathway for UDP-N-acetylglucosamine (UDP-GlcNAc). The C-terminal domain catalyzes the transfer of acetyl group from acetyl coenzyme A to glucosamine-1-phosphate (GlcN-1-P) to produce N-acetylglucosamine-1-phosphate (GlcNAc-1-P), which is converted into UDP-GlcNAc by the transfer of uridine 5-monophosphate (from uridine 5-triphosphate), a reaction catalyzed by the N-terminal domain. In Neisseria meningitidis serogroup B (strain ATCC BAA-335 / MC58), this protein is Bifunctional protein GlmU.